The chain runs to 191 residues: Protein GrpE (191 aa).

The tract at residues methionine 1–lysine 22 is disordered.

Belongs to the GrpE family. As to quaternary structure, homodimer.

The protein resides in the cytoplasm. Functionally, participates actively in the response to hyperosmotic and heat shock by preventing the aggregation of stress-denatured proteins, in association with DnaK and GrpE. It is the nucleotide exchange factor for DnaK and may function as a thermosensor. Unfolded proteins bind initially to DnaJ; upon interaction with the DnaJ-bound protein, DnaK hydrolyzes its bound ATP, resulting in the formation of a stable complex. GrpE releases ADP from DnaK; ATP binding to DnaK triggers the release of the substrate protein, thus completing the reaction cycle. Several rounds of ATP-dependent interactions between DnaJ, DnaK and GrpE are required for fully efficient folding. This is Protein GrpE from Helicobacter pylori (strain Shi470).